A 1002-amino-acid chain; its full sequence is Protein SMAX1-LIKE 7 (1002 aa).

In terms of domain architecture, Clp R spans 8–185 (ARQCLTEETA…DVLHPPVTSQ (178 aa)). Repeat stretches follow at residues 12 to 86 (LTEE…LDRL) and 103 to 185 (VSNS…VTSQ). The EAR signature appears at 854–858 (LDLNL).

It belongs to the ClpA/ClpB family. As to quaternary structure, interacts with TPL/TPR in an EAR-motif dependent manner. Interacts with TPL, TPR1, TPR2 and TPR4. Interacts with MAX2 and TPR2. Interacts with D14. The interaction with D14 occurs in the presence of (2'R) stereoisomers of strigolactones, but not (2'S) stereoisomers. Ubiquitinated upon strigolactone treatment. Strigolactone, but not karrikin, triggers rapid SCF(MAX2)-dependent degradation. Expressed in axillary branches and roots. Detected in seedlings and leaves. Expressed in the primary rosette buds and expanding leaves of adult rosettes, the vasculature of the hypocotyls, cotyledons, and mature roots, and in the midvein and petioles of young leaves.

Its subcellular location is the nucleus. Probable component of a transcriptional corepressor complex involved in branching control. Regulates cotyledon expansion and lateral root growth, but not germination or hypocotyl elongation. Promotes auxin transport and PIN1 accumulation in the stem and represses BRC1/TCP18 expression in axillary buds. This chain is Protein SMAX1-LIKE 7, found in Arabidopsis thaliana (Mouse-ear cress).